Reading from the N-terminus, the 254-residue chain is Alcohol dehydrogenase (254 aa).

Residue 10-33 (FVAGLGGIGLDTNREIVKSGPKNL) coordinates NAD(+). Serine 138 contacts substrate. Tyrosine 151 serves as the catalytic Proton acceptor.

Belongs to the short-chain dehydrogenases/reductases (SDR) family. Homodimer.

It carries out the reaction a primary alcohol + NAD(+) = an aldehyde + NADH + H(+). The enzyme catalyses a secondary alcohol + NAD(+) = a ketone + NADH + H(+). The polypeptide is Alcohol dehydrogenase (Adh) (Scaptomyza albovittata (Fruit fly)).